A 241-amino-acid polypeptide reads, in one-letter code: Kynurenine formamidase (241 aa).

Residues 23 to 27 carry the HGGXW motif; sequence HGGAW. Residue S95 is the Nucleophile of the active site. Active-site residues include D191 and H223.

It belongs to the kynurenine formamidase family. In terms of assembly, homodimer.

It carries out the reaction N-formyl-L-kynurenine + H2O = L-kynurenine + formate + H(+). It participates in amino-acid degradation; L-tryptophan degradation via kynurenine pathway; L-kynurenine from L-tryptophan: step 2/2. Its function is as follows. Catalyzes the hydrolysis of N-formyl-L-kynurenine to L-kynurenine, the second step in the kynurenine pathway of tryptophan degradation. Kynurenine may be further oxidized to nicotinic acid, NAD(H) and NADP(H). Required for elimination of toxic metabolites. In Eremothecium gossypii (strain ATCC 10895 / CBS 109.51 / FGSC 9923 / NRRL Y-1056) (Yeast), this protein is Kynurenine formamidase.